A 152-amino-acid chain; its full sequence is SsrA-binding protein (152 aa).

This sequence belongs to the SmpB family.

The protein resides in the cytoplasm. Its function is as follows. Required for rescue of stalled ribosomes mediated by trans-translation. Binds to transfer-messenger RNA (tmRNA), required for stable association of tmRNA with ribosomes. tmRNA and SmpB together mimic tRNA shape, replacing the anticodon stem-loop with SmpB. tmRNA is encoded by the ssrA gene; the 2 termini fold to resemble tRNA(Ala) and it encodes a 'tag peptide', a short internal open reading frame. During trans-translation Ala-aminoacylated tmRNA acts like a tRNA, entering the A-site of stalled ribosomes, displacing the stalled mRNA. The ribosome then switches to translate the ORF on the tmRNA; the nascent peptide is terminated with the 'tag peptide' encoded by the tmRNA and targeted for degradation. The ribosome is freed to recommence translation, which seems to be the essential function of trans-translation. This chain is SsrA-binding protein, found in Helicobacter pylori (strain HPAG1).